A 57-amino-acid polypeptide reads, in one-letter code: Large ribosomal subunit protein bL32B (57 aa).

It belongs to the bacterial ribosomal protein bL32 family.

The sequence is that of Large ribosomal subunit protein bL32B (rpmF2) from Listeria innocua serovar 6a (strain ATCC BAA-680 / CLIP 11262).